The sequence spans 135 residues: MIIDTSALLAYFDAAEPDHAAVSECIDSSADALVVSPYVVAELDYLVATRVGVDAELAVLRELAGGAWELANCGAAEIEQAARIVTKYQDQRIGIADAANVVLADRYRTRTILTLDRRHFSALRPIGGGRFTVIP.

The PINc domain occupies 1-118 (MIIDTSALLA…TRTILTLDRR (118 aa)). Asp-4 and Asp-97 together coordinate Mg(2+).

Belongs to the PINc/VapC protein family. Mg(2+) is required as a cofactor.

Toxic component of a type II toxin-antitoxin (TA) system. An RNase. Upon expression in M.smegmatis inhibits colony formation. Its toxic effect is neutralized by coexpression with cognate antitoxin VapB26. In Mycobacterium tuberculosis (strain ATCC 25618 / H37Rv), this protein is Ribonuclease VapC26.